Reading from the N-terminus, the 71-residue chain is UPF0346 protein SZO_05010 (71 aa).

This sequence belongs to the UPF0346 family.

The sequence is that of UPF0346 protein SZO_05010 from Streptococcus equi subsp. zooepidemicus (strain H70).